We begin with the raw amino-acid sequence, 315 residues long: MRQNNNITEFVLLGFSQYPDVQNALFVMFLLIYIVTMVGNLLIVVSIIASPFLGSPVYFFLACLSFIDAVYSTTISPVLIVDLLCDKKTISFPACMGQLFIEHLFGDTDVFLLVVMAYDRYVATCKPLRYLTIMNRQVCILLLVVAVTGGFLHSVFQILVVYSLPFCGPNVIYHFFCNIYPLLDLECTDTYFVGLAVVFNGGAICMVIFTLLLISYGVILNSLKTYSPEGRHKAPFICSSHFIMVILFFVPCIFLYVRPVSNFPIDKFLTVFYSVITPKLNPFIYMLRNSEMRNAIENLLGYQSGKTGFRCSKLN.

At 1-24 (MRQNNNITEFVLLGFSQYPDVQNA) the chain is on the extracellular side. The N-linked (GlcNAc...) asparagine glycan is linked to N6. Residues 25-45 (LFVMFLLIYIVTMVGNLLIVV) form a helical membrane-spanning segment. Over 46–57 (SIIASPFLGSPV) the chain is Cytoplasmic. The helical transmembrane segment at 58-80 (YFFLACLSFIDAVYSTTISPVLI) threads the bilayer. At 81–95 (VDLLCDKKTISFPAC) the chain is on the extracellular side. Cysteines 95 and 177 form a disulfide. The helical transmembrane segment at 96–116 (MGQLFIEHLFGDTDVFLLVVM) threads the bilayer. Topologically, residues 117 to 139 (AYDRYVATCKPLRYLTIMNRQVC) are cytoplasmic. The helical transmembrane segment at 140–160 (ILLLVVAVTGGFLHSVFQILV) threads the bilayer. The Extracellular segment spans residues 161–193 (VYSLPFCGPNVIYHFFCNIYPLLDLECTDTYFV). The chain crosses the membrane as a helical span at residues 194 to 214 (GLAVVFNGGAICMVIFTLLLI). Residues 215–235 (SYGVILNSLKTYSPEGRHKAP) are Cytoplasmic-facing. The chain crosses the membrane as a helical span at residues 236–256 (FICSSHFIMVILFFVPCIFLY). The Extracellular portion of the chain corresponds to 257–266 (VRPVSNFPID). A helical membrane pass occupies residues 267–287 (KFLTVFYSVITPKLNPFIYML). The Cytoplasmic portion of the chain corresponds to 288–315 (RNSEMRNAIENLLGYQSGKTGFRCSKLN).

This sequence belongs to the G-protein coupled receptor 1 family.

It is found in the cell membrane. Its function is as follows. Odorant receptor. The chain is Olfactory receptor 4A8 (OR4A8) from Homo sapiens (Human).